A 564-amino-acid polypeptide reads, in one-letter code: MAKNTTNRHYSLRKLKTGTASVAVALTVVGAGLVAGQTVRADHSDLVAEKQRLEDLGQKFERLKQRSELYLQQYYDNKSNGYKGDWYVQQLKMLNRDLEQAYNELSGEAHKDALGKLGIDNADLKAKITELEKSVEEKNDVLSQIKKELEEAEKDIQFGREVHAADLLRHKQEIAEKENVISKLNGELQPLKQKVDETDRNLQQEKQKVLSLEQQLAVTKENAKKDFELAALGHQLADKEYNAKIAELESKLADAKKDFELAALGHQHAHNEYQAKLAEKDGQIKQLEEQKQILDASRKGTARDLEAVRQAKKATEAELNNLKAELAKVTEQKQILDASRKGTARDLEAVRKSKKQQVEAALKQLEEQNKISEASRKGLRRDLDTSREAKKQVEKDLANLTAELDKVKEEKQISDASRQGLRRDLDASREAKKQVEKALEEANSKLAALEKLNKDLEESKKLTEKEKAELQAKLEAEAKALKEQLAKQAEELAKLRAGKASDSQTPDAKPGNKAVPGKGQAPQAGTKPNQNKAPMKETKRQLPSTGETANPFFTAAALTVMAAA.

The N-terminal stretch at 1-41 (MAKNTTNRHYSLRKLKTGTASVAVALTVVGAGLVAGQTVRA) is a signal peptide. Positions 44–505 (SDLVAEKQRL…RAGKASDSQT (462 aa)) form a coiled coil. C repeat units lie at residues 285-319 (KQLEEQKQILDASRKGTARDLEAVRQAKKATEAEL), 327-361 (AKVTEQKQILDASRKGTARDLEAVRKSKKQQVEAA), 363-397 (KQLEEQNKISEASRKGLRRDLDTSREAKKQVEKDL), and 405-439 (DKVKEEKQISDASRQGLRRDLDASREAKKQVEKAL). Disordered regions lie at residues 372–391 (SEASRKGLRRDLDTSREAKK) and 404–438 (LDKVKEEKQISDASRQGLRRDLDASREAKKQVEKA). Composition is skewed to basic and acidic residues over residues 404 to 413 (LDKVKEEKQI) and 421 to 438 (LRRDLDASREAKKQVEKA). D repeat units lie at residues 472–477 (AKLEAE), 478–483 (AKALKE), 486–491 (AKQAEE), and 493–498 (AKLRAG). A disordered region spans residues 493–550 (AKLRAGKASDSQTPDAKPGNKAVPGKGQAPQAGTKPNQNKAPMKETKRQLPSTGETAN). Residues 542–546 (LPSTG) carry the LPXTG sorting signal motif. Residue threonine 545 is modified to Pentaglycyl murein peptidoglycan amidated threonine. The propeptide at 546 to 564 (GETANPFFTAAALTVMAAA) is removed by sortase.

This sequence belongs to the M protein family.

Its subcellular location is the secreted. The protein localises to the cell wall. Its function is as follows. This protein is one of the different antigenic serotypes of protein M. Protein M is closely associated with virulence of the bacterium and can render the organism resistant to phagocytosis. This Streptococcus pyogenes protein is M protein, serotype 12 (emm12).